The following is a 396-amino-acid chain: 1-deoxy-D-xylulose 5-phosphate reductoisomerase (396 aa).

5 residues coordinate NADPH: T13, G14, S15, I16, and N127. Residue K128 coordinates 1-deoxy-D-xylulose 5-phosphate. E129 provides a ligand contact to NADPH. D153 serves as a coordination point for Mn(2+). Positions 154, 155, 184, and 207 each coordinate 1-deoxy-D-xylulose 5-phosphate. E155 is a binding site for Mn(2+). G213 is an NADPH binding site. 1-deoxy-D-xylulose 5-phosphate is bound by residues S220, N225, K226, and E229. Residue E229 coordinates Mn(2+).

The protein belongs to the DXR family. It depends on Mg(2+) as a cofactor. Mn(2+) is required as a cofactor.

The enzyme catalyses 2-C-methyl-D-erythritol 4-phosphate + NADP(+) = 1-deoxy-D-xylulose 5-phosphate + NADPH + H(+). The protein operates within isoprenoid biosynthesis; isopentenyl diphosphate biosynthesis via DXP pathway; isopentenyl diphosphate from 1-deoxy-D-xylulose 5-phosphate: step 1/6. In terms of biological role, catalyzes the NADPH-dependent rearrangement and reduction of 1-deoxy-D-xylulose-5-phosphate (DXP) to 2-C-methyl-D-erythritol 4-phosphate (MEP). The sequence is that of 1-deoxy-D-xylulose 5-phosphate reductoisomerase from Stutzerimonas stutzeri (strain A1501) (Pseudomonas stutzeri).